The sequence spans 500 residues: Amino-acid acetyltransferase, mitochondrial (500 aa).

The N-terminal 19 residues, M1 to S19, are a transit peptide targeting the mitochondrion. One can recognise an N-acetyltransferase domain in the interval F336 to P496.

It belongs to the acetyltransferase family.

It is found in the mitochondrion. The catalysed reaction is L-glutamate + acetyl-CoA = N-acetyl-L-glutamate + CoA + H(+). The protein operates within amino-acid biosynthesis; L-arginine biosynthesis; N(2)-acetyl-L-ornithine from L-glutamate: step 1/4. Its function is as follows. N-acetylglutamate synthase involved in arginine biosynthesis. This chain is Amino-acid acetyltransferase, mitochondrial (arg6), found in Schizosaccharomyces pombe (strain 972 / ATCC 24843) (Fission yeast).